The sequence spans 59 residues: Small ribosomal subunit protein bS21 (59 aa).

Positions 32-42 (VRKREHYDKPS) are enriched in basic and acidic residues. Residues 32–59 (VRKREHYDKPSVKRKKKAEAARRKNAKK) form a disordered region. A compositionally biased stretch (basic residues) spans 43–59 (VKRKKKAEAARRKNAKK).

Belongs to the bacterial ribosomal protein bS21 family.

This Clostridioides difficile (strain 630) (Peptoclostridium difficile) protein is Small ribosomal subunit protein bS21.